A 74-amino-acid polypeptide reads, in one-letter code: Exodeoxyribonuclease 7 small subunit (74 aa).

Belongs to the XseB family. Heterooligomer composed of large and small subunits.

The protein localises to the cytoplasm. The enzyme catalyses Exonucleolytic cleavage in either 5'- to 3'- or 3'- to 5'-direction to yield nucleoside 5'-phosphates.. Its function is as follows. Bidirectionally degrades single-stranded DNA into large acid-insoluble oligonucleotides, which are then degraded further into small acid-soluble oligonucleotides. The sequence is that of Exodeoxyribonuclease 7 small subunit from Haemophilus ducreyi (strain 35000HP / ATCC 700724).